A 378-amino-acid polypeptide reads, in one-letter code: Chaperone protein DnaJ 2 (378 aa).

The region spanning 4–68 is the J domain; that stretch reads DYYGLLGVSR…EKRRIVDLGG (65 aa). A CR-type zinc finger spans residues 128-210; that stretch reads GVTKQVTVDT…CVGDGRVRAR (83 aa). Zn(2+) contacts are provided by C141, C144, C158, C161, C184, C187, C198, and C201. 4 CXXCXGXG motif repeats span residues 141 to 148, 158 to 165, 184 to 191, and 198 to 205; these read CDRCQGKG, CDTCGGRG, CPTCRGVG, and CCQCVGDG.

The protein belongs to the DnaJ family. As to quaternary structure, homodimer. It depends on Zn(2+) as a cofactor.

Its subcellular location is the cytoplasm. Functionally, participates actively in the response to hyperosmotic and heat shock by preventing the aggregation of stress-denatured proteins and by disaggregating proteins, also in an autonomous, DnaK-independent fashion. Unfolded proteins bind initially to DnaJ; upon interaction with the DnaJ-bound protein, DnaK hydrolyzes its bound ATP, resulting in the formation of a stable complex. GrpE releases ADP from DnaK; ATP binding to DnaK triggers the release of the substrate protein, thus completing the reaction cycle. Several rounds of ATP-dependent interactions between DnaJ, DnaK and GrpE are required for fully efficient folding. Also involved, together with DnaK and GrpE, in the DNA replication of plasmids through activation of initiation proteins. The protein is Chaperone protein DnaJ 2 of Mycobacterium leprae (strain TN).